The chain runs to 191 residues: Large ribosomal subunit protein uL6 (191 aa).

This sequence belongs to the universal ribosomal protein uL6 family. Component of the large ribosomal subunit. Mature ribosomes consist of a small (40S) and a large (60S) subunit. The 40S subunit contains about 32 different proteins and 1 molecule of RNA (18S). The 60S subunit contains 45 different proteins and 3 molecules of RNA (25S, 5.8S and 5S).

It localises to the cytoplasm. In terms of biological role, component of the ribosome, a large ribonucleoprotein complex responsible for the synthesis of proteins in the cell. The small ribosomal subunit (SSU) binds messenger RNAs (mRNAs) and translates the encoded message by selecting cognate aminoacyl-transfer RNA (tRNA) molecules. The large subunit (LSU) contains the ribosomal catalytic site termed the peptidyl transferase center (PTC), which catalyzes the formation of peptide bonds, thereby polymerizing the amino acids delivered by tRNAs into a polypeptide chain. The nascent polypeptides leave the ribosome through a tunnel in the LSU and interact with protein factors that function in enzymatic processing, targeting, and the membrane insertion of nascent chains at the exit of the ribosomal tunnel. This Candida albicans (strain SC5314 / ATCC MYA-2876) (Yeast) protein is Large ribosomal subunit protein uL6.